Consider the following 521-residue polypeptide: NAD(P)H-quinone oxidoreductase subunit 2 (521 aa).

A run of 14 helical transmembrane segments spans residues 15–35 (ILPE…DITF), 42–62 (WTPY…YTQW), 79–99 (LSIV…LMSV), 109–126 (IGEF…AMFL), 131–153 (ELVM…TGYM), 167–187 (LLIG…LYGL), 208–228 (LALV…IAAV), 242–262 (PTPV…ALAI), 276–296 (WQFI…VVAI), 304–324 (MLAY…VIGT), 332–352 (VFYL…VILF), 376–396 (LALS…GFFG), 398–418 (LYLF…LGLI), and 464–484 (VGLV…NPLL).

The protein belongs to the complex I subunit 2 family. NDH-1 can be composed of about 15 different subunits; different subcomplexes with different compositions have been identified which probably have different functions.

It localises to the cellular thylakoid membrane. It catalyses the reaction a plastoquinone + NADH + (n+1) H(+)(in) = a plastoquinol + NAD(+) + n H(+)(out). It carries out the reaction a plastoquinone + NADPH + (n+1) H(+)(in) = a plastoquinol + NADP(+) + n H(+)(out). Functionally, NDH-1 shuttles electrons from an unknown electron donor, via FMN and iron-sulfur (Fe-S) centers, to quinones in the respiratory and/or the photosynthetic chain. The immediate electron acceptor for the enzyme in this species is believed to be plastoquinone. Couples the redox reaction to proton translocation, and thus conserves the redox energy in a proton gradient. Cyanobacterial NDH-1 also plays a role in inorganic carbon-concentration. The polypeptide is NAD(P)H-quinone oxidoreductase subunit 2 (Acaryochloris marina (strain MBIC 11017)).